A 995-amino-acid polypeptide reads, in one-letter code: Protein translocase subunit SecA (995 aa).

Residues Gln86, 104 to 108 (GEGKT), and Asp535 contribute to the ATP site. The interval 883–911 (AQTVSSDGNGEVVRKPQRRSTPQIGRNEL) is disordered. Zn(2+)-binding residues include Cys912, Cys914, Cys923, and His924. Residues 939–995 (PSAPPASKALKSTPATQTAVAEEAAKIQAAINSGKLPPTQTTPRGRQAPSVPRGKKR) form a disordered region. A compositionally biased stretch (low complexity) spans 957–969 (AVAEEAAKIQAAI).

This sequence belongs to the SecA family. In terms of assembly, monomer and homodimer. Part of the essential Sec protein translocation apparatus which comprises SecA, SecYEG and auxiliary proteins SecDF. Other proteins may also be involved. The cofactor is Zn(2+).

Its subcellular location is the cell membrane. It is found in the cytoplasm. The catalysed reaction is ATP + H2O + cellular proteinSide 1 = ADP + phosphate + cellular proteinSide 2.. Functionally, part of the Sec protein translocase complex. Interacts with the SecYEG preprotein conducting channel. Has a central role in coupling the hydrolysis of ATP to the transfer of proteins into and across the cell membrane, serving as an ATP-driven molecular motor driving the stepwise translocation of polypeptide chains across the membrane. The chain is Protein translocase subunit SecA from Chloroflexus aurantiacus (strain ATCC 29366 / DSM 635 / J-10-fl).